The sequence spans 497 residues: Transcription termination/antitermination protein NusA (497 aa).

An S1 motif domain is found at glycine 135–serine 200. One can recognise a KH domain in the interval arginine 302–isoleucine 372. Tandem repeats lie at residues lysine 364–leucine 414 and glycine 439–cysteine 489. Positions lysine 364–cysteine 489 are 2 X 51 AA approximate repeats.

The protein belongs to the NusA family. As to quaternary structure, monomer. Binds directly to the core enzyme of the DNA-dependent RNA polymerase and to nascent RNA.

The protein localises to the cytoplasm. Functionally, participates in both transcription termination and antitermination. This Buchnera aphidicola subsp. Baizongia pistaciae (strain Bp) protein is Transcription termination/antitermination protein NusA.